A 306-amino-acid polypeptide reads, in one-letter code: Non-specific ribonucleoside hydrolase RihC (306 aa).

The active site involves His-235.

The protein belongs to the IUNH family. RihC subfamily.

Hydrolyzes both purine and pyrimidine ribonucleosides with a broad-substrate specificity. This chain is Non-specific ribonucleoside hydrolase RihC, found in Salmonella paratyphi B (strain ATCC BAA-1250 / SPB7).